A 405-amino-acid chain; its full sequence is uncharacterized protein (405 aa).

Belongs to the UDP-glycosyltransferase family.

This is an uncharacterized protein from Bacillus subtilis (strain 168).